We begin with the raw amino-acid sequence, 120 residues long: U13-lycotoxin-Ls1f (120 aa).

The first 16 residues, 1–16, serve as a signal peptide directing secretion; it reads MKILFVLISILYAVYC. The propeptide occupies 17–54; that stretch reads FSSEEDVDSAYLANELEPVEDINSEQYAALEPKEEQER. 4 disulfides stabilise this stretch: C56–C70, C63–C76, C69–C87, and C78–C85. Residues 56 to 95 enclose the Agouti domain; the sequence is CAGMGQDCKDDCDCCLNIATCNCWFGRYFCSCTFGDYQTC.

The protein belongs to the neurotoxin 05 (agouti) family. In terms of processing, contains 6 disulfide bonds. Expressed by the venom gland.

It is found in the secreted. The chain is U13-lycotoxin-Ls1f from Lycosa singoriensis (Wolf spider).